We begin with the raw amino-acid sequence, 698 residues long: Epithelial sodium channel subunit alpha (698 aa).

The tract at residues 1 to 70 (MLDHTRAPEL…SAPRQPTEEE (70 aa)) is disordered. Over 1–110 (MLDHTRAPEL…CSKHNRMKTA (110 aa)) the chain is Cytoplasmic. Residues 111-131 (FWAVLWLCTFGMMYWQFALLF) traverse the membrane as a helical segment. The Extracellular portion of the chain corresponds to 132 to 589 (EEYLSYPVSL…SQWSLWFGSS (458 aa)). 3 cysteine pairs are disulfide-bonded: cysteine 158–cysteine 332, cysteine 256–cysteine 263, and cysteine 309–cysteine 316. An N-linked (GlcNAc...) asparagine glycan is attached at asparagine 190. The segment at 200–270 (RRRSSRDLLG…SDCFYQTYSS (71 aa)) is gating release of inhibition by proteolysis (GRIP); protease-sensitive region that is responsible for the proteolytic activation of the channel. The tract at residues 213 to 243 (HPLQRLRTPPPPYSGRTARSGSSSVRDNNPQ) is disordered. Polar residues predominate over residues 229–243 (TARSGSSSVRDNNPQ). An N-linked (GlcNAc...) asparagine glycan is attached at asparagine 259. Residues asparagine 320, asparagine 339, and asparagine 424 are each glycosylated (N-linked (GlcNAc...) asparagine). 7 cysteine pairs are disulfide-bonded: cysteine 421-cysteine 506, cysteine 443-cysteine 483, cysteine 443-cysteine 502, cysteine 447-cysteine 498, cysteine 456-cysteine 483, cysteine 456-cysteine 506, and cysteine 458-cysteine 472. A glycan (N-linked (GlcNAc...) asparagine) is linked at asparagine 538. A helical membrane pass occupies residues 590–610 (VLSVVEMAELIFDLLVITLLM). The Cytoplasmic segment spans residues 611-698 (LLRRFRSRYW…DCSACALAAL (88 aa)). The segment at 637–663 (ASSFPSRFCPHPTSPPPSLPQQGMTPP) is disordered. A PY motif; recruits WW domain-containing proteins and is thereby required for ubiquitination and inhibition of the channel by NEDD4 and NEDD4L motif is present at residues 669 to 673 (PPPAY).

It belongs to the amiloride-sensitive sodium channel (TC 1.A.6) family. SCNN1A subfamily. Heterotrimer; containing an alpha/SCNN1A, a beta/SCNN1B and a gamma/SCNN1G subunit. Interacts with WWP1 (via WW domains). Interacts with WWP2 (via WW domains); inhibits the channel. Interacts with BPIFA1; the interaction is indirect via SCNN1B and inhibits the proteolytic processing of SCNN1A and SCNN1G and the activation of ENaC. Interacts with the full-length immature form of PCSK9 (pro-PCSK9). Post-translationally, ubiquitinated. Can be ubiquitinated at multiple sites and undergo monoubiquitination and polyubiquitination. Ubiquitination by NEDD4 or NEDD4L inhibits the ENaC channel through endocytosis, intracellular retention and degradation of its individual subunits. N-glycosylated. In terms of processing, ENaC is activated through the proteolytic maturation of its subunits. Furin cleaves the SCNN1A subunit, which results in a stepwise increase in the open probability of the channel due to the release of an inhibitory tract. BPIFA1, which is recruited by the SCNN1B subunit, prevents the proteolytic activation of ENaC. In terms of tissue distribution, detected in kidney, lung and testis (at protein level). In the testis, detected within the seminiferous tubules but not in the interstitial cells (at protein level).

The protein resides in the apical cell membrane. The protein localises to the cell projection. It localises to the cilium. Its subcellular location is the cytoplasmic granule. It is found in the cytoplasm. The protein resides in the cytoplasmic vesicle. The protein localises to the secretory vesicle. It localises to the acrosome. Its subcellular location is the flagellum. The catalysed reaction is Na(+)(in) = Na(+)(out). Originally identified and characterized by its inhibition by the diuretic drug amiloride. In terms of biological role, this is one of the three pore-forming subunits of the heterotrimeric epithelial sodium channel (ENaC), a critical regulator of sodium balance and fluid homeostasis. ENaC operates in epithelial tissues, where it mediates the electrodiffusion of sodium ions from extracellular fluid through the apical membrane of cells, with water following osmotically. It plays a key role in maintaining sodium homeostasis through electrogenic sodium reabsorption in the kidneys. Additionally, ENaC is essential for airway surface liquid homeostasis, which is crucial for proper mucus clearance. This is Epithelial sodium channel subunit alpha from Rattus norvegicus (Rat).